Consider the following 952-residue polypeptide: MAEGGAADLDIQRSDIATLLKTSLRKGDTWYLVDSRWFKQWKKYVGFDSWDKYQMGDQNVYPGPIDNSGLLRDGDAQSLKEHLIDELDYILLPTEGWNKLVSWYTLMEGQEPIARKVVEQGMFVKHCKVEVYLTELKLCENGNMNNVVTRRFSKADTIDTIEKEIRKIFNIPDEKETRLWNKYMSNTFEPLNKPDSTIQDAGLYQGQVLVIEQKNEDGTWPRGPSTPNVKNSNYCLPSYTAYKNYDYSEPGRNNEQPGLCGLSNLGNTCFMNSAFQCLSNTPPLTEYFLNDKYQEELNFDNPLGMRGEIAKSYAELIKQMWSGKYSYVTPRAFKTQVGRFAPQFSGYQQQDCQELLAFLLDGLHEDLNRIRKKPYIQLKDADGRPDKVVAEEAWENHLKRNDSIIVDIFHGLFKSTLVCPECAKISVTFDPFCYLTLPLPMKKERTLEVYLVRMDPLTKPMQYKVVVPKIGNILDLCTALSLLSGVPADKMIVTDIYNHRFHRIFAMDENLSSIMERDDIYVFEININRTEDTEHVIIPVCLREKFRHSSYTHHTGSSLFGQPFLMAVPRNNTEDKLYNLLLVRMCRYVKISTDTEDTEGSLHCCKDQNINGNGPNGIHEEGSPSEMETDEPDDESSQDQELPSENENSQSEDSVGGDNDSENGLCTEETCRGQLTGHKKRLFTFQFNNLGNTDINYIKDDTRHIRFDDRQLRLDERSFLALDWDPDLKKRYFDENAAEDFEKHESVEYKPPKKPFVKLKDCIELFTTKEKLGAEDPWYCPNCKEHQQATKKLDLWSLPPVLVVHLKRFSYSRYMRDKLDTLVDFPINDLDMSEFLINPNAGPCRYNLIAVSNHYGGMGGGHYTAFAKNKDDGKWYYFDDSSVSTASEDQIVSKAAYVLFYQRQDTFSGTGFFPLDRETKGASAATGIPLESDEDSNDNDNDIENENCMHTN.

A2 carries the N-acetylalanine modification. The interval A2 to G223 is mediates interaction with SART3. In terms of domain architecture, DUSP spans A7 to V118. T226 is modified (phosphothreonine). Residues C260–Q904 form the USP domain. The Nucleophile role is filled by C269. T573 is subject to Phosphothreonine. Positions T598–C666 are disordered. Residues M627 to S644 are compositionally biased toward acidic residues. H862 acts as the Proton acceptor in catalysis. Positions S923–N952 are disordered. Residues E931–N945 are compositionally biased toward acidic residues. Phosphoserine occurs at positions 932 and 936.

The protein belongs to the peptidase C19 family. As to quaternary structure, a homodimer structure has been reported; however it is unclear whether the protein form a homodimer in vivo. Identified in a complex with the COP9 signalosome complex (CSN). Interacts with SMAD1, SMAD2 and SMAD3; the interaction is direct. Forms a complex with SMURF2 and SMAD7. Interacts with TGFBR1. Interacts with SART3; the interaction is direct. May interact with RNF20 and RNF40. May interact with PRKN. Interacts with INCA1. Phosphorylated. Phosphorylation protects against ubiquitination and subsequent degradation by the proteasome. In terms of processing, ubiquitinated, leading to degradation by the proteasome.

It is found in the cytoplasm. The protein localises to the nucleus. Its subcellular location is the mitochondrion. It carries out the reaction Thiol-dependent hydrolysis of ester, thioester, amide, peptide and isopeptide bonds formed by the C-terminal Gly of ubiquitin (a 76-residue protein attached to proteins as an intracellular targeting signal).. Hydrolase that removes conjugated ubiquitin from target proteins and regulates various pathways such as the TGF-beta receptor signaling, NF-kappa-B and RNF41/NRDP1-PRKN pathways. Acts as a key regulator of TGF-beta receptor signaling pathway, but the precise mechanism is still unclear: according to a report, acts by promoting deubiquitination of monoubiquitinated R-SMADs (SMAD1, SMAD2 and/or SMAD3), thereby alleviating inhibition of R-SMADs and promoting activation of TGF-beta target genes. According to another reports, regulates the TGF-beta receptor signaling pathway by mediating deubiquitination and stabilization of TGFBR1, leading to an enhanced TGF-beta signal. Able to mediate deubiquitination of monoubiquitinated substrates, 'Lys-27'-, 'Lys-48'- and 'Lys-63'-linked polyubiquitin chains. May also regulate gene expression and/or DNA repair through the deubiquitination of histone H2B. Acts as an inhibitor of mitophagy by counteracting the action of parkin (PRKN): hydrolyzes cleavage of 'Lys-48'- and 'Lys-63'-linked polyubiquitin chains attached by parkin on target proteins such as MFN2, thereby reducing parkin's ability to drive mitophagy. Acts as an associated component of COP9 signalosome complex (CSN) and regulates different pathways via this association: regulates NF-kappa-B by mediating deubiquitination of NFKBIA and deubiquitinates substrates bound to VCP. Involved in endosome organization by mediating deubiquitination of SQSTM1: ubiquitinated SQSTM1 forms a molecular bridge that restrains cognate vesicles in the perinuclear region and its deubiquitination releases target vesicles for fast transport into the cell periphery. Acts as a negative regulator of antifungal immunity by mediating 'Lys-27'-linked deubiquitination of CARD9, thereby inactivating CARD9. The sequence is that of Ubiquitin carboxyl-terminal hydrolase 15 (USP15) from Bos taurus (Bovine).